The primary structure comprises 288 residues: Putative aryl-alcohol dehydrogenase AAD10 (288 aa).

This sequence belongs to the aldo/keto reductase family. Aldo/keto reductase 2 subfamily.

In Saccharomyces cerevisiae (strain ATCC 204508 / S288c) (Baker's yeast), this protein is Putative aryl-alcohol dehydrogenase AAD10 (AAD10).